A 155-amino-acid chain; its full sequence is MKIQLIAVGTKMPAWVERGFEEYRRRFPKDMPFELVEIGAGKRGKNADIPRILQKEGEAMLAAAGRSRLVTLDIPGKPWTTEQLAVQLEAWKLDGRDVALLVGGPEGLSPECKAAAEQSWSLSPLTLPHPLVRVLVAESLYRACSITTNHPYHRE.

S-adenosyl-L-methionine contacts are provided by residues Leu72, Gly103, and 122–127 (LSPLTL).

Belongs to the RNA methyltransferase RlmH family. Homodimer.

It localises to the cytoplasm. The enzyme catalyses pseudouridine(1915) in 23S rRNA + S-adenosyl-L-methionine = N(3)-methylpseudouridine(1915) in 23S rRNA + S-adenosyl-L-homocysteine + H(+). Specifically methylates the pseudouridine at position 1915 (m3Psi1915) in 23S rRNA. In Aeromonas salmonicida (strain A449), this protein is Ribosomal RNA large subunit methyltransferase H.